We begin with the raw amino-acid sequence, 86 residues long: MATVFERVKKVSVEQLGAEEKDVVPAASFADDLGADSLDQVELIMALETEFGTPDAKFEIPDTDAEKLKTVQAVVDYLKSKGIKDS.

In terms of domain architecture, Carrier spans 2-82 (ATVFERVKKV…AVVDYLKSKG (81 aa)). S37 is subject to O-(pantetheine 4'-phosphoryl)serine.

It belongs to the acyl carrier protein (ACP) family. In terms of processing, 4'-phosphopantetheine is transferred from CoA to a specific serine of apo-ACP by AcpS. This modification is essential for activity because fatty acids are bound in thioester linkage to the sulfhydryl of the prosthetic group.

It localises to the cytoplasm. The protein operates within lipid metabolism; fatty acid biosynthesis. In terms of biological role, carrier of the growing fatty acid chain in fatty acid biosynthesis. This chain is Acyl carrier protein, found in Dehalococcoides mccartyi (strain ATCC BAA-2266 / KCTC 15142 / 195) (Dehalococcoides ethenogenes (strain 195)).